We begin with the raw amino-acid sequence, 192 residues long: Adenylate kinase (192 aa).

Residue 10-15 participates in ATP binding; the sequence is GSGKGT. Positions 30 to 59 are NMP; it reads STGDMLREVISRETEVGRKAKAIINAGALV. AMP-binding positions include T31, R36, 57–59, 85–88, and Q92; these read ALV and GYPR. Positions 126–142 are LID; that stretch reads KRVQETIAVGGQVRSDD. R127 serves as a coordination point for ATP. The AMP site is built by R139 and R150. M178 contacts ATP.

This sequence belongs to the adenylate kinase family. As to quaternary structure, monomer.

The protein localises to the cytoplasm. The enzyme catalyses AMP + ATP = 2 ADP. It participates in purine metabolism; AMP biosynthesis via salvage pathway; AMP from ADP: step 1/1. Functionally, catalyzes the reversible transfer of the terminal phosphate group between ATP and AMP. Plays an important role in cellular energy homeostasis and in adenine nucleotide metabolism. The chain is Adenylate kinase from Bartonella quintana (strain Toulouse) (Rochalimaea quintana).